The chain runs to 148 residues: Transcriptional regulator MraZ (148 aa).

SpoVT-AbrB domains follow at residues 5–53 and 82–125; these read ETAI…AEKE and SAVL…SEQA.

This sequence belongs to the MraZ family. In terms of assembly, forms oligomers.

The protein localises to the cytoplasm. It localises to the nucleoid. This chain is Transcriptional regulator MraZ, found in Xanthomonas oryzae pv. oryzae (strain MAFF 311018).